We begin with the raw amino-acid sequence, 129 residues long: Histone H2B.2 (129 aa).

Over residues 1–19 (MAPKAEKKPASKAPAEKKP) the composition is skewed to basic and acidic residues. A disordered region spans residues 1–38 (MAPKAEKKPASKAPAEKKPAAKKTATSGTKKRSKTRKE). An N6-acetyllysine; alternate mark is found at K7 and K8. Glycyl lysine isopeptide (Lys-Gly) (interchain with G-Cter in SUMO); alternate cross-links involve residues K7 and K8. Phosphoserine is present on S11. K12 is modified (N6-acetyllysine). An N6-acetyllysine; alternate modification is found at K17. Residue K17 forms a Glycyl lysine isopeptide (Lys-Gly) (interchain with G-Cter in SUMO); alternate linkage. K18 is covalently cross-linked (Glycyl lysine isopeptide (Lys-Gly) (interchain with G-Cter in SUMO)). K123 participates in a covalent cross-link: Glycyl lysine isopeptide (Lys-Gly) (interchain with G-Cter in ubiquitin).

It belongs to the histone H2B family. The nucleosome is a histone octamer containing two molecules each of H2A, H2B, H3 and H4 assembled in one H3-H4 heterotetramer and two H2A-H2B heterodimers. The octamer wraps approximately 147 bp of DNA. Post-translationally, monoubiquitinated by the UBC2-BRE1 complex to form H2BK123ub1. H2BK123ub1 gives a specific tag for epigenetic transcriptional activation and is also prerequisite for H3K4me and H3K79me formation. H2BK123ub1 also modulates the formation of double-strand breaks during meiosis and is a prerequisite for DNA-damage checkpoint activation. In terms of processing, phosphorylated by STE20 to form H2BS10ph during progression through meiotic prophase. May be correlated with chromosome condensation. Acetylated by GCN5 to form H2BK11ac and H2BK16ac. H2BK16ac can also be formed by ESA1. Acetylation of N-terminal lysines and particularly formation of H2BK11acK16ac has a positive effect on transcription. Post-translationally, sumoylation to form H2BK6su or H2BK7su, and probably also H2BK16su or H2BK17su, occurs preferentially near the telomeres and represses gene transcription.

The protein localises to the nucleus. Its subcellular location is the chromosome. Its function is as follows. Core component of nucleosome. Nucleosomes wrap and compact DNA into chromatin, limiting DNA accessibility to the cellular machineries which require DNA as a template. Histones thereby play a central role in transcription regulation, DNA repair, DNA replication and chromosomal stability. DNA accessibility is regulated via a complex set of post-translational modifications of histones, also called histone code, and nucleosome remodeling. This is Histone H2B.2 (HTB2) from Debaryomyces hansenii (strain ATCC 36239 / CBS 767 / BCRC 21394 / JCM 1990 / NBRC 0083 / IGC 2968) (Yeast).